Reading from the N-terminus, the 210-residue chain is Dephospho-CoA kinase (210 aa).

Residues 18–210 form the DPCK domain; that stretch reads RIGITGGIAS…LSYPQVEVLL (193 aa). 26-31 provides a ligand contact to ATP; it reads ASGKTS.

This sequence belongs to the CoaE family.

The protein localises to the cytoplasm. The enzyme catalyses 3'-dephospho-CoA + ATP = ADP + CoA + H(+). It functions in the pathway cofactor biosynthesis; coenzyme A biosynthesis; CoA from (R)-pantothenate: step 5/5. Functionally, catalyzes the phosphorylation of the 3'-hydroxyl group of dephosphocoenzyme A to form coenzyme A. This Prochlorococcus marinus (strain SARG / CCMP1375 / SS120) protein is Dephospho-CoA kinase.